Consider the following 365-residue polypeptide: P43 5S RNA-binding protein (365 aa).

C2H2-type zinc fingers lie at residues 15–39 (FRCP…MAGH), 45–69 (WKCG…MKRH), 75–100 (HSCP…LYKH), 106–130 (LKCS…VSEH), 136–160 (SVCD…HRRH), 163–187 (YRCS…LKKH), 191–213 (LQCA…KATH), 220–245 (LPCP…RKVH), and 251–275 (HRCP…LVVH).

In terms of assembly, the 42S RNP particle comprises four subunits each of which contains one molecule of 5S RNA, three molecules of tRNA, two molecules of p50 (EF1-alpha) and one molecule of the 5S RNA binding protein 43.

Its function is as follows. p43 is a 5S RNA binding protein which is a major constituent of oocytes and comprises part of a 42S ribonucleoprotein storage particle. The polypeptide is P43 5S RNA-binding protein (Xenopus borealis (Kenyan clawed frog)).